Reading from the N-terminus, the 161-residue chain is UPF0262 protein Meso_0189 (161 aa).

Belongs to the UPF0262 family.

The chain is UPF0262 protein Meso_0189 from Chelativorans sp. (strain BNC1).